Consider the following 267-residue polypeptide: Ribosomal RNA large subunit methyltransferase E (267 aa).

S-adenosyl-L-methionine is bound by residues Gly52, Phe54, Asp72, Asp90, and Asp114. Lys154 serves as the catalytic Proton acceptor. A compositionally biased stretch (low complexity) spans 212–252 (EAPRAPAPPEQAAAPEEATAPATRAARQKPAPAKKPAAAKR). The tract at residues 212-267 (EAPRAPAPPEQAAAPEEATAPATRAARQKPAPAKKPAAAKRPAARKRAAKKPARRA) is disordered. Over residues 253–267 (PAARKRAAKKPARRA) the composition is skewed to basic residues.

It belongs to the class I-like SAM-binding methyltransferase superfamily. RNA methyltransferase RlmE family.

The protein localises to the cytoplasm. It catalyses the reaction uridine(2552) in 23S rRNA + S-adenosyl-L-methionine = 2'-O-methyluridine(2552) in 23S rRNA + S-adenosyl-L-homocysteine + H(+). Specifically methylates the uridine in position 2552 of 23S rRNA at the 2'-O position of the ribose in the fully assembled 50S ribosomal subunit. The chain is Ribosomal RNA large subunit methyltransferase E from Anaeromyxobacter dehalogenans (strain 2CP-C).